Here is a 390-residue protein sequence, read N- to C-terminus: Probable purine permease 7 (390 aa).

A run of 10 helical transmembrane segments spans residues 42 to 62 (WLRV…ATIL), 74 to 94 (TYVV…FRFF), 110 to 130 (SPSF…VSAY), 131 to 151 (AYLS…LILA), 169 to 189 (FTPL…LLVV), 205 to 225 (VIGF…LSLI), 244 to 264 (LAIY…FASG), 286 to 306 (TLAS…GLIF), 312 to 332 (FSNS…VIVF), and 341 to 361 (IFSI…HYLD).

The protein belongs to the purine permeases (TC 2.A.7.14) family.

The protein resides in the membrane. The protein is Probable purine permease 7 (PUP7) of Arabidopsis thaliana (Mouse-ear cress).